A 73-amino-acid chain; its full sequence is uncharacterized protein (73 aa).

The tract at residues 1–32 (MFLSSAVRKDSNGVRHLPSVQRWTPGSPPTRA) is disordered.

This is an uncharacterized protein from Frog virus 3 (isolate Goorha) (FV-3).